A 132-amino-acid polypeptide reads, in one-letter code: Large ribosomal subunit protein uL14 (132 aa).

Belongs to the universal ribosomal protein uL14 family. Part of the 50S ribosomal subunit. Forms a cluster with proteins L3 and L24e, part of which may contact the 16S rRNA in 2 intersubunit bridges.

Its function is as follows. Binds to 23S rRNA. Forms part of two intersubunit bridges in the 70S ribosome. The protein is Large ribosomal subunit protein uL14 of Thermoplasma acidophilum (strain ATCC 25905 / DSM 1728 / JCM 9062 / NBRC 15155 / AMRC-C165).